A 233-amino-acid polypeptide reads, in one-letter code: MPKRGKKYLEALKLVDRSKAYPIAEAIELVKKTNIAKFDATVEVAFRLGVDPKKADQQIRGAVVLPHGTGKVARVLVFAKGEKAKEAEAAGADYVGDAEYINKIQQGWFDFDVVVATPDMMGEVGKLGRILGPKGLMPNPKTGTVTFDVAKAVQEIKAGKVEYRVDKAGNIHVPIGKVSFDNEKLAENFAAVYEAILKAKPAAAKGTYVKNVTITSTMGPGIKVDPSTVAVAQ.

This sequence belongs to the universal ribosomal protein uL1 family. As to quaternary structure, part of the 50S ribosomal subunit.

Functionally, binds directly to 23S rRNA. The L1 stalk is quite mobile in the ribosome, and is involved in E site tRNA release. Protein L1 is also a translational repressor protein, it controls the translation of the L11 operon by binding to its mRNA. The chain is Large ribosomal subunit protein uL1 from Geobacillus kaustophilus (strain HTA426).